A 182-amino-acid polypeptide reads, in one-letter code: ATP-dependent protease subunit HslV (182 aa).

Threonine 12 is a catalytic residue. 3 residues coordinate Na(+): alanine 167, cysteine 170, and threonine 173.

It belongs to the peptidase T1B family. HslV subfamily. In terms of assembly, a double ring-shaped homohexamer of HslV is capped on each side by a ring-shaped HslU homohexamer. The assembly of the HslU/HslV complex is dependent on binding of ATP.

The protein resides in the cytoplasm. It catalyses the reaction ATP-dependent cleavage of peptide bonds with broad specificity.. With respect to regulation, allosterically activated by HslU binding. Its function is as follows. Protease subunit of a proteasome-like degradation complex believed to be a general protein degrading machinery. The polypeptide is ATP-dependent protease subunit HslV (Chlorobium phaeobacteroides (strain BS1)).